The following is a 416-amino-acid chain: Gamma-glutamyl phosphate reductase (416 aa).

Belongs to the gamma-glutamyl phosphate reductase family.

It localises to the cytoplasm. It carries out the reaction L-glutamate 5-semialdehyde + phosphate + NADP(+) = L-glutamyl 5-phosphate + NADPH + H(+). The protein operates within amino-acid biosynthesis; L-proline biosynthesis; L-glutamate 5-semialdehyde from L-glutamate: step 2/2. In terms of biological role, catalyzes the NADPH-dependent reduction of L-glutamate 5-phosphate into L-glutamate 5-semialdehyde and phosphate. The product spontaneously undergoes cyclization to form 1-pyrroline-5-carboxylate. This Streptococcus pyogenes serotype M3 (strain ATCC BAA-595 / MGAS315) protein is Gamma-glutamyl phosphate reductase.